The sequence spans 400 residues: Tryptophan synthase beta chain (400 aa).

Position 92 is an N6-(pyridoxal phosphate)lysine (lysine 92).

It belongs to the TrpB family. As to quaternary structure, tetramer of two alpha and two beta chains. It depends on pyridoxal 5'-phosphate as a cofactor.

The catalysed reaction is (1S,2R)-1-C-(indol-3-yl)glycerol 3-phosphate + L-serine = D-glyceraldehyde 3-phosphate + L-tryptophan + H2O. It functions in the pathway amino-acid biosynthesis; L-tryptophan biosynthesis; L-tryptophan from chorismate: step 5/5. Functionally, the beta subunit is responsible for the synthesis of L-tryptophan from indole and L-serine. This is Tryptophan synthase beta chain from Neisseria meningitidis serogroup A / serotype 4A (strain DSM 15465 / Z2491).